We begin with the raw amino-acid sequence, 345 residues long: Platelet-derived growth factor C (345 aa).

The first 22 residues, 1 to 22 (MLLLGLLLLTSALAGRRHGAAA), serve as a signal peptide directing secretion. Residues 46–163 (HEKIITVTSN…PGFCIHYTLL (118 aa)) form the CUB domain. Asparagine 55 is a glycosylation site (N-linked (GlcNAc...) asparagine). 4 disulfides stabilise this stretch: cysteine 104–cysteine 124, cysteine 250–cysteine 294, cysteine 280–cysteine 335, and cysteine 287–cysteine 337.

The protein belongs to the PDGF/VEGF growth factor family. As to quaternary structure, homodimer; disulfide-linked. Interacts with PDGFRA homodimers, and with heterodimers formed by PDGFRA and PDGFRB. Post-translationally, proteolytic removal of the N-terminal CUB domain releasing the core domain is necessary for unmasking the receptor-binding epitopes of the core domain. Cleavage after basic residues in the hinge region (region connecting the CUB and growth factor domains) gives rise to the receptor-binding form.

The protein localises to the secreted. Its function is as follows. Growth factor that plays an essential role in the regulation of embryonic development, cell proliferation, cell migration, survival and chemotaxis. Potent mitogen and chemoattractant for cells of mesenchymal origin. Required for normal skeleton formation during embryonic development. Required for normal skin morphogenesis during embryonic development. Plays an important role in wound healing, in angiogenesis and blood vessel development. In Gallus gallus (Chicken), this protein is Platelet-derived growth factor C (PDGFC).